A 547-amino-acid polypeptide reads, in one-letter code: Inositol-tetrakisphosphate 1-kinase 6 (547 aa).

K263 contributes to the 1D-myo-inositol 1,3,4-trisphosphate binding site. Positions 317 and 370 each coordinate ATP. The region spanning L327 to E539 is the ATP-grasp domain. 1D-myo-inositol 1,3,4-trisphosphate contacts are provided by H381 and K415. ATP contacts are provided by residues Q404–K415, S430, and S450. Residues D497, D511, and N513 each coordinate Mg(2+). The 1D-myo-inositol 1,3,4-trisphosphate site is built by N513 and S517.

This sequence belongs to the ITPK1 family. As to quaternary structure, monomer. Mg(2+) is required as a cofactor.

It catalyses the reaction 1D-myo-inositol 3,4,5,6-tetrakisphosphate + ATP = 1D-myo-inositol 1,3,4,5,6-pentakisphosphate + ADP + H(+). The catalysed reaction is 1D-myo-inositol 1,3,4-trisphosphate + ATP = 1D-myo-inositol 1,3,4,5-tetrakisphosphate + ADP + H(+). The enzyme catalyses 1D-myo-inositol 1,3,4-trisphosphate + ATP = 1D-myo-inositol 1,3,4,6-tetrakisphosphate + ADP + H(+). Its function is as follows. Kinase that can phosphorylate various inositol polyphosphate such as Ins(3,4,5,6)P4 or Ins(1,3,4)P3 and participates in phytic acid biosynthesis in developing seeds. Phytic acid is the primary storage form of phosphorus in cereal grains and other plant seeds. The protein is Inositol-tetrakisphosphate 1-kinase 6 of Oryza sativa subsp. indica (Rice).